The sequence spans 454 residues: Putative serine carboxypeptidase-like 23 (454 aa).

Positions 1–22 are cleaved as a signal peptide; that stretch reads MARIHLIIILLVISSTSSSSSS. N-linked (GlcNAc...) asparagine glycosylation is found at Asn52, Asn102, and Asn136. 3 disulfides stabilise this stretch: Cys85–Cys338, Cys247–Cys258, and Cys282–Cys306. Residue Ser178 is part of the active site. Residues Asn287 and Asn327 are each glycosylated (N-linked (GlcNAc...) asparagine). Catalysis depends on residues Asp375 and His427.

It belongs to the peptidase S10 family. In terms of tissue distribution, expression not detected.

Its subcellular location is the secreted. Probable carboxypeptidase. The sequence is that of Putative serine carboxypeptidase-like 23 (SCPL23) from Arabidopsis thaliana (Mouse-ear cress).